Consider the following 282-residue polypeptide: tRNA pseudouridine synthase B (282 aa).

The active-site Nucleophile is D39.

The protein belongs to the pseudouridine synthase TruB family. Type 1 subfamily.

The catalysed reaction is uridine(55) in tRNA = pseudouridine(55) in tRNA. Functionally, responsible for synthesis of pseudouridine from uracil-55 in the psi GC loop of transfer RNAs. The sequence is that of tRNA pseudouridine synthase B from Borreliella burgdorferi (strain ATCC 35210 / DSM 4680 / CIP 102532 / B31) (Borrelia burgdorferi).